A 369-amino-acid polypeptide reads, in one-letter code: uncharacterized protein (369 aa).

Lysine 184 is modified (N6-(pyridoxal phosphate)lysine).

The protein belongs to the class-V pyridoxal-phosphate-dependent aminotransferase family. It depends on pyridoxal 5'-phosphate as a cofactor.

This is an uncharacterized protein from Helicobacter pylori (strain ATCC 700392 / 26695) (Campylobacter pylori).